We begin with the raw amino-acid sequence, 178 residues long: Nicotinamide-nucleotide adenylyltransferase (178 aa).

This sequence belongs to the archaeal NMN adenylyltransferase family.

It is found in the cytoplasm. It catalyses the reaction beta-nicotinamide D-ribonucleotide + ATP + H(+) = diphosphate + NAD(+). It functions in the pathway cofactor biosynthesis; NAD(+) biosynthesis; NAD(+) from nicotinamide D-ribonucleotide: step 1/1. The chain is Nicotinamide-nucleotide adenylyltransferase from Caldivirga maquilingensis (strain ATCC 700844 / DSM 13496 / JCM 10307 / IC-167).